We begin with the raw amino-acid sequence, 151 residues long: Small ribosomal subunit protein bS6 (151 aa).

The interval 94–151 (EEHEQGPSAMMRKRDDDDRGERGERPRGPRPERGERGERGERGPRRPREDNIGEEGLY) is disordered. Residues 105–144 (RKRDDDDRGERGERPRGPRPERGERGERGERGPRRPREDN) show a composition bias toward basic and acidic residues.

The protein belongs to the bacterial ribosomal protein bS6 family.

Functionally, binds together with bS18 to 16S ribosomal RNA. This is Small ribosomal subunit protein bS6 from Beijerinckia indica subsp. indica (strain ATCC 9039 / DSM 1715 / NCIMB 8712).